The following is a 67-amino-acid chain: uncharacterized protein (67 aa).

A run of 2 helical transmembrane segments spans residues 10–30 and 40–60; these read EFFI…ITMW and LMVG…WMVF.

This sequence belongs to the plectrovirus ORF10 family.

Its subcellular location is the host membrane. This is an uncharacterized protein from Spiroplasma citri (SpV1).